Reading from the N-terminus, the 326-residue chain is Aspartate carbamoyltransferase catalytic subunit (326 aa).

The carbamoyl phosphate site is built by R55 and T56. L-aspartate is bound at residue K83. Residues R105, H135, and Q138 each coordinate carbamoyl phosphate. Residues R176 and R230 each contribute to the L-aspartate site. 2 residues coordinate carbamoyl phosphate: G271 and P272.

This sequence belongs to the aspartate/ornithine carbamoyltransferase superfamily. ATCase family. As to quaternary structure, heterododecamer (2C3:3R2) of six catalytic PyrB chains organized as two trimers (C3), and six regulatory PyrI chains organized as three dimers (R2).

The enzyme catalyses carbamoyl phosphate + L-aspartate = N-carbamoyl-L-aspartate + phosphate + H(+). Its pathway is pyrimidine metabolism; UMP biosynthesis via de novo pathway; (S)-dihydroorotate from bicarbonate: step 2/3. In terms of biological role, catalyzes the condensation of carbamoyl phosphate and aspartate to form carbamoyl aspartate and inorganic phosphate, the committed step in the de novo pyrimidine nucleotide biosynthesis pathway. The protein is Aspartate carbamoyltransferase catalytic subunit of Streptomyces coelicolor (strain ATCC BAA-471 / A3(2) / M145).